Consider the following 360-residue polypeptide: Putative beta-glucosidase 15 (360 aa).

Basic and acidic residues-rich tracts occupy residues 1-11 (MARRRMGEEGK) and 47-67 (GRRE…ERKG). 2 disordered regions span residues 1–21 (MARR…NGRQ) and 35–103 (GWRS…RAER). A compositionally biased stretch (basic residues) spans 75-86 (GKRRRERRRGGR). Tyr-183 is a binding site for a beta-D-glucoside. A disulfide bridge connects residues Cys-191 and Cys-196. A beta-D-glucoside-binding positions include Glu-254, Trp-301, 308-309 (EW), and Phe-317. Glu-254 functions as the Nucleophile in the catalytic mechanism. Asn-346 carries an N-linked (GlcNAc...) asparagine glycan.

This sequence belongs to the glycosyl hydrolase 1 family.

The catalysed reaction is Hydrolysis of terminal, non-reducing beta-D-glucosyl residues with release of beta-D-glucose.. The protein is Putative beta-glucosidase 15 (BGLU15) of Oryza sativa subsp. japonica (Rice).